We begin with the raw amino-acid sequence, 501 residues long: Ribose import ATP-binding protein RbsA (501 aa).

ABC transporter domains are found at residues 5 to 241 and 252 to 495; these read LQLK…VGRK and APGD…VGKL. 37–44 contacts ATP; it reads GENGAGKS.

Belongs to the ABC transporter superfamily. Ribose importer (TC 3.A.1.2.1) family. In terms of assembly, the complex is composed of an ATP-binding protein (RbsA), two transmembrane proteins (RbsC) and a solute-binding protein (RbsB).

It is found in the cell inner membrane. It carries out the reaction D-ribose(out) + ATP + H2O = D-ribose(in) + ADP + phosphate + H(+). Its function is as follows. Part of the ABC transporter complex RbsABC involved in ribose import. Responsible for energy coupling to the transport system. This is Ribose import ATP-binding protein RbsA from Shigella sonnei (strain Ss046).